Consider the following 60-residue polypeptide: Large ribosomal subunit protein uL30 (60 aa).

Belongs to the universal ribosomal protein uL30 family. In terms of assembly, part of the 50S ribosomal subunit.

This is Large ribosomal subunit protein uL30 from Limosilactobacillus fermentum (strain NBRC 3956 / LMG 18251) (Lactobacillus fermentum).